We begin with the raw amino-acid sequence, 548 residues long: ADP,ATP carrier protein 1 (548 aa).

The next 2 membrane-spanning stretches (helical) occupy residues 39–59 and 75–95; these read RPVFTYMSIILFLVSYIYSVS and SIPYLKVLVVLPVNICIVFSI. N-linked (GlcNAc...) asparagine glycosylation occurs at N101. Transmembrane regions (helical) follow at residues 107–127, 149–169, 171–191, 204–224, 239–259, 302–322, 350–370, and 374–394; these read VFSIMCVMFGIYFCLYGTVLM, MVFMGLQWTIALALPVNSWTS, LMYLSAEIWGTVVFQFLFFAL, FIPLFLVFGNVALIVSGFSMK, LFFRKLVFVLMGICSFVIYLI, LVLAISFVVIAYSVSVNMVEA, IQLAVGALSIILLLSSFPALI, and GFLYVAFVPPIFCIFGMASVF. Residues N400 and N406 are each glycosylated (N-linked (GlcNAc...) asparagine). The chain crosses the membrane as a helical span at residues 410–430; it reads LGFVSIGENLWLEQLLGAIIV. N-linked (GlcNAc...) asparagine glycosylation is present at N488. The chain crosses the membrane as a helical span at residues 494–514; it reads KAAISSLTIVTVITACWGFAV.

This sequence belongs to the ADP/ATP translocase tlc family.

It is found in the cell membrane. Its function is as follows. ATP transporter involved in the uptake of ATP from the host cell cytoplasm. Provides the microsporidian cell with host ATP in exchange for ADP. This is an obligate exchange system. This energy acquiring activity is an important component of microsporidian parasitism. In Paranosema grylli (Microsporidian parasite), this protein is ADP,ATP carrier protein 1 (ANC1).